Reading from the N-terminus, the 315-residue chain is D-alanine--D-alanine ligase B (315 aa).

The 201-residue stretch at 109–309 (KKVAAAAGVV…FAELLSWMVE (201 aa)) folds into the ATP-grasp domain. 135 to 190 (PMKPPYVVKPVREGSSFGVVIVKEDQPHPPQVIGSADWKYGDEVMVEGYIAGRELT) is an ATP binding site. The Mg(2+) site is built by aspartate 259, glutamate 276, and asparagine 278.

Belongs to the D-alanine--D-alanine ligase family. Requires Mg(2+) as cofactor. The cofactor is Mn(2+).

The protein localises to the cytoplasm. The enzyme catalyses 2 D-alanine + ATP = D-alanyl-D-alanine + ADP + phosphate + H(+). Its pathway is cell wall biogenesis; peptidoglycan biosynthesis. Functionally, cell wall formation. This chain is D-alanine--D-alanine ligase B, found in Brucella melitensis biotype 1 (strain ATCC 23456 / CCUG 17765 / NCTC 10094 / 16M).